The chain runs to 621 residues: Transmembrane protein 200C (621 aa).

Residues 12–37 (ARKQDPLRPPSQIPKRKRKAKKRRKN) form a disordered region. Over residues 25–36 (PKRKRKAKKRRK) the composition is skewed to basic residues. A helical membrane pass occupies residues 53–73 (GLIALCGILVLLVGIAMAVVG). Residues 80-147 (GTNREGGKQL…RAASPSSSST (68 aa)) are disordered. Low complexity predominate over residues 125 to 147 (SSSAGAPRSTPPARAASPSSSST). A helical transmembrane segment spans residues 167–187 (VFGPLIMGIGIFLFICANAVL). Disordered regions lie at residues 284–315 (WPPH…PREP), 347–368 (ASSC…QSTA), and 384–598 (LQGG…FTNK). Over residues 290 to 303 (APSGGRPRGAASPP) the composition is skewed to low complexity. Residues 405–418 (PGERGSQEIPRGEL) show a composition bias toward basic and acidic residues. Over residues 479-490 (RAPPSPEPPPSP) the composition is skewed to pro residues. Composition is skewed to low complexity over residues 491–505 (GSAD…KAAS) and 523–533 (GSSQSDDPSSS). Residues 586-595 (EQPQPVQRQF) show a composition bias toward polar residues.

Belongs to the TMEM200 family.

It is found in the membrane. This Homo sapiens (Human) protein is Transmembrane protein 200C (TMEM200C).